An 88-amino-acid chain; its full sequence is MINNLSISSSLIPDKQRGSVESQVFYLTNRVLRLTQHLQLHGRDYSSQRGLWKILSKRKQLLVYLSKRDKLRYDDLIGQLGIRGLKTR.

The protein belongs to the universal ribosomal protein uS15 family. In terms of assembly, part of the 30S ribosomal subunit.

The protein resides in the plastid. The protein localises to the chloroplast. The polypeptide is Small ribosomal subunit protein uS15c (rps15) (Pinus thunbergii (Japanese black pine)).